We begin with the raw amino-acid sequence, 181 residues long: ATP-dependent protease subunit HslV (181 aa).

Thr6 is an active-site residue. Na(+)-binding residues include Ala162, Cys165, and Thr168.

Belongs to the peptidase T1B family. HslV subfamily. As to quaternary structure, a double ring-shaped homohexamer of HslV is capped on each side by a ring-shaped HslU homohexamer. The assembly of the HslU/HslV complex is dependent on binding of ATP.

Its subcellular location is the cytoplasm. It carries out the reaction ATP-dependent cleavage of peptide bonds with broad specificity.. With respect to regulation, allosterically activated by HslU binding. Its function is as follows. Protease subunit of a proteasome-like degradation complex believed to be a general protein degrading machinery. The polypeptide is ATP-dependent protease subunit HslV (Solidesulfovibrio magneticus (strain ATCC 700980 / DSM 13731 / RS-1) (Desulfovibrio magneticus)).